A 385-amino-acid chain; its full sequence is Trichodiene synthase (385 aa).

It belongs to the trichodiene synthase family.

The enzyme catalyses (2E,6E)-farnesyl diphosphate = trichodiene + diphosphate. The protein operates within sesquiterpene biosynthesis; trichothecene biosynthesis. Its function is as follows. TS is a member of the terpene cyclase group of enzymes. It catalyzes the isomerization and cyclization of farnesyl pyro-phosphate to form trichodiene, the first cyclic intermediate in the biosynthetic pathway for trichothecenes. It serves to branch trichothecene biosynthesis from the isoprenoid pathway. The chain is Trichodiene synthase (TRI5) from Paramyrothecium roridum (Myrothecium leaf spot fungus).